Here is a 193-residue protein sequence, read N- to C-terminus: Iron-sulfur flavoprotein MJ1083 (193 aa).

[4Fe-4S] cluster contacts are provided by Cys47, Cys50, Cys53, and Cys59.

Belongs to the SsuE family. Isf subfamily. In terms of assembly, homodimer. Requires FMN as cofactor. [4Fe-4S] cluster is required as a cofactor.

Functionally, redox-active protein probably involved in electron transport. The chain is Iron-sulfur flavoprotein MJ1083 from Methanocaldococcus jannaschii (strain ATCC 43067 / DSM 2661 / JAL-1 / JCM 10045 / NBRC 100440) (Methanococcus jannaschii).